The chain runs to 476 residues: Bifunctional protein HldE (476 aa).

The interval 1-318 (MKVTLPDFRR…ENAIRGRAET (318 aa)) is ribokinase. 195–198 (NLSE) contributes to the ATP binding site. The active site involves Asp264. The interval 344–476 (MTNGIFDILH…IIQSIKNGLG (133 aa)) is cytidylyltransferase.

The protein in the N-terminal section; belongs to the carbohydrate kinase PfkB family. This sequence in the C-terminal section; belongs to the cytidylyltransferase family. Homodimer.

It carries out the reaction D-glycero-beta-D-manno-heptose 7-phosphate + ATP = D-glycero-beta-D-manno-heptose 1,7-bisphosphate + ADP + H(+). It catalyses the reaction D-glycero-beta-D-manno-heptose 1-phosphate + ATP + H(+) = ADP-D-glycero-beta-D-manno-heptose + diphosphate. It functions in the pathway nucleotide-sugar biosynthesis; ADP-L-glycero-beta-D-manno-heptose biosynthesis; ADP-L-glycero-beta-D-manno-heptose from D-glycero-beta-D-manno-heptose 7-phosphate: step 1/4. Its pathway is nucleotide-sugar biosynthesis; ADP-L-glycero-beta-D-manno-heptose biosynthesis; ADP-L-glycero-beta-D-manno-heptose from D-glycero-beta-D-manno-heptose 7-phosphate: step 3/4. Catalyzes the phosphorylation of D-glycero-D-manno-heptose 7-phosphate at the C-1 position to selectively form D-glycero-beta-D-manno-heptose-1,7-bisphosphate. In terms of biological role, catalyzes the ADP transfer from ATP to D-glycero-beta-D-manno-heptose 1-phosphate, yielding ADP-D-glycero-beta-D-manno-heptose. In Yersinia enterocolitica serotype O:8 / biotype 1B (strain NCTC 13174 / 8081), this protein is Bifunctional protein HldE.